A 285-amino-acid chain; its full sequence is N(G),N(G)-dimethylarginine dimethylaminohydrolase 1 (285 aa).

Ala-2 is subject to N-acetylalanine. Residues Leu-30, Asp-73, 78 to 79, Arg-98, and Arg-145 each bind substrate; that span reads ED. Residue His-173 is the Proton donor of the active site. Position 222 is an S-nitrosocysteine (Cys-222). Residue Val-268 coordinates substrate. Residue Cys-274 is modified to S-nitrosocysteine. Cys-274 functions as the Nucleophile in the catalytic mechanism. Cys-274 lines the Zn(2+) pocket.

This sequence belongs to the DDAH family. Monomer. In terms of tissue distribution, detected in brain, liver, kidney and pancreas, and at low levels in skeletal muscle.

The enzyme catalyses N(omega),N(omega)-dimethyl-L-arginine + H2O = dimethylamine + L-citrulline. The catalysed reaction is N(omega)-methyl-L-arginine + H2O = L-citrulline + methylamine. Its activity is regulated as follows. Inhibited by zinc ions. Enzyme purified in the absence of 1,10-phenanthroline contains on average 0.4 zinc atoms per subunit. Inhibited by 4-hydroxy-nonenal through the formation of a covalent adduct with His-173. Competitively inhibited by N(5)-iminopropyl-ornithine. Functionally, hydrolyzes N(G),N(G)-dimethyl-L-arginine (ADMA) and N(G)-monomethyl-L-arginine (MMA) which act as inhibitors of NOS. Has therefore a role in the regulation of nitric oxide generation. The polypeptide is N(G),N(G)-dimethylarginine dimethylaminohydrolase 1 (Homo sapiens (Human)).